Consider the following 387-residue polypeptide: Sedoheptulose-1,7-bisphosphatase, chloroplastic (387 aa).

The cysteines at positions 109 and 114 are disulfide-linked. Mg(2+)-binding residues include aspartate 120, glutamate 149, aspartate 170, leucine 172, and aspartate 173. Substrate-binding positions include 173–176 (DGSS), tyrosine 284, and lysine 314. Glutamate 320 is a binding site for Mg(2+).

The protein belongs to the FBPase class 1 family. As to quaternary structure, homodimer. The cofactor is Mg(2+).

It localises to the plastid. The protein localises to the chloroplast. The catalysed reaction is D-sedoheptulose 1,7-bisphosphate + H2O = D-sedoheptulose 7-phosphate + phosphate. It functions in the pathway carbohydrate biosynthesis; Calvin cycle. The polypeptide is Sedoheptulose-1,7-bisphosphatase, chloroplastic (Spinacia oleracea (Spinach)).